A 196-amino-acid chain; its full sequence is dTTP/UTP pyrophosphatase (196 aa).

The active-site Proton acceptor is aspartate 73.

It belongs to the Maf family. YhdE subfamily. Requires a divalent metal cation as cofactor.

The protein localises to the cytoplasm. It catalyses the reaction dTTP + H2O = dTMP + diphosphate + H(+). It carries out the reaction UTP + H2O = UMP + diphosphate + H(+). Its function is as follows. Nucleoside triphosphate pyrophosphatase that hydrolyzes dTTP and UTP. May have a dual role in cell division arrest and in preventing the incorporation of modified nucleotides into cellular nucleic acids. This is dTTP/UTP pyrophosphatase from Myxococcus xanthus (strain DK1622).